A 311-amino-acid chain; its full sequence is Lipoyl synthase (311 aa).

[4Fe-4S] cluster is bound by residues cysteine 55, cysteine 60, cysteine 66, cysteine 81, cysteine 85, cysteine 88, and serine 292. The Radical SAM core domain maps to 67 to 281; that stretch reads WEDREATFLI…ARFAEGLGFA (215 aa).

This sequence belongs to the radical SAM superfamily. Lipoyl synthase family. Requires [4Fe-4S] cluster as cofactor.

The protein localises to the cytoplasm. The catalysed reaction is [[Fe-S] cluster scaffold protein carrying a second [4Fe-4S](2+) cluster] + N(6)-octanoyl-L-lysyl-[protein] + 2 oxidized [2Fe-2S]-[ferredoxin] + 2 S-adenosyl-L-methionine + 4 H(+) = [[Fe-S] cluster scaffold protein] + N(6)-[(R)-dihydrolipoyl]-L-lysyl-[protein] + 4 Fe(3+) + 2 hydrogen sulfide + 2 5'-deoxyadenosine + 2 L-methionine + 2 reduced [2Fe-2S]-[ferredoxin]. Its pathway is protein modification; protein lipoylation via endogenous pathway; protein N(6)-(lipoyl)lysine from octanoyl-[acyl-carrier-protein]: step 2/2. Catalyzes the radical-mediated insertion of two sulfur atoms into the C-6 and C-8 positions of the octanoyl moiety bound to the lipoyl domains of lipoate-dependent enzymes, thereby converting the octanoylated domains into lipoylated derivatives. This Mycobacterium bovis (strain ATCC BAA-935 / AF2122/97) protein is Lipoyl synthase.